Reading from the N-terminus, the 283-residue chain is Protein/nucleic acid deglycase HchA (283 aa).

Residues His86, Glu91, and His123 each coordinate Zn(2+). Catalysis depends on Cys185, which acts as the Nucleophile.

It belongs to the peptidase C56 family. HchA subfamily. As to quaternary structure, homodimer.

The protein resides in the cytoplasm. It catalyses the reaction N(omega)-(1-hydroxy-2-oxopropyl)-L-arginyl-[protein] + H2O = lactate + L-arginyl-[protein] + H(+). The catalysed reaction is N(6)-(1-hydroxy-2-oxopropyl)-L-lysyl-[protein] + H2O = lactate + L-lysyl-[protein] + H(+). The enzyme catalyses S-(1-hydroxy-2-oxopropyl)-L-cysteinyl-[protein] + H2O = lactate + L-cysteinyl-[protein] + H(+). It carries out the reaction N(omega)-(1-hydroxy-2-oxoethyl)-L-arginyl-[protein] + H2O = L-arginyl-[protein] + glycolate + H(+). It catalyses the reaction N(6)-(1-hydroxy-2-oxoethyl)-L-lysyl-[protein] + H2O = glycolate + L-lysyl-[protein] + H(+). The catalysed reaction is S-(1-hydroxy-2-oxoethyl)-L-cysteinyl-[protein] + H2O = glycolate + L-cysteinyl-[protein] + H(+). The enzyme catalyses N(2)-(1-hydroxy-2-oxopropyl)-dGTP + H2O = lactate + dGTP + H(+). It carries out the reaction N(2)-(1-hydroxy-2-oxopropyl)-GTP + H2O = lactate + GTP + H(+). It catalyses the reaction N(2)-(1-hydroxy-2-oxopropyl)-GDP + H2O = lactate + GDP + H(+). The catalysed reaction is N(2)-(1-hydroxy-2-oxopropyl)-GMP + H2O = lactate + GMP + H(+). The enzyme catalyses N(2)-(1-hydroxy-2-oxoethyl)-dGTP + H2O = dGTP + glycolate + H(+). It carries out the reaction N(2)-(1-hydroxy-2-oxoethyl)-GTP + H2O = glycolate + GTP + H(+). It catalyses the reaction N(2)-(1-hydroxy-2-oxoethyl)-GDP + H2O = glycolate + GDP + H(+). The catalysed reaction is N(2)-(1-hydroxy-2-oxoethyl)-GMP + H2O = glycolate + GMP + H(+). The enzyme catalyses an N(2)-(1-hydroxy-2-oxopropyl)-guanosine in RNA + H2O = a guanosine in RNA + lactate + H(+). It carries out the reaction an N(2)-(1-hydroxy-2-oxopropyl)-2'-deoxyguanosine in DNA + H2O = a 2'-deoxyguanosine in DNA + lactate + H(+). It catalyses the reaction an N(2)-(1-hydroxy-2-oxoethyl)-guanosine in RNA + H2O = a guanosine in RNA + glycolate + H(+). The catalysed reaction is an N(2)-(1-hydroxy-2-oxoethyl)-2'-deoxyguanosine in DNA + H2O = a 2'-deoxyguanosine in DNA + glycolate + H(+). Functionally, protein and nucleotide deglycase that catalyzes the deglycation of the Maillard adducts formed between amino groups of proteins or nucleotides and reactive carbonyl groups of glyoxals. Thus, functions as a protein deglycase that repairs methylglyoxal- and glyoxal-glycated proteins, and releases repaired proteins and lactate or glycolate, respectively. Deglycates cysteine, arginine and lysine residues in proteins, and thus reactivates these proteins by reversing glycation by glyoxals. Acts on early glycation intermediates (hemithioacetals and aminocarbinols), preventing the formation of Schiff bases and advanced glycation endproducts (AGE). Also functions as a nucleotide deglycase able to repair glycated guanine in the free nucleotide pool (GTP, GDP, GMP, dGTP) and in DNA and RNA. Is thus involved in a major nucleotide repair system named guanine glycation repair (GG repair), dedicated to reversing methylglyoxal and glyoxal damage via nucleotide sanitization and direct nucleic acid repair. Plays an important role in protecting cells from carbonyl stress. The sequence is that of Protein/nucleic acid deglycase HchA from Escherichia coli O81 (strain ED1a).